Here is a 121-residue protein sequence, read N- to C-terminus: Large ribosomal subunit protein uL18 (121 aa).

The protein belongs to the universal ribosomal protein uL18 family. In terms of assembly, part of the 50S ribosomal subunit; part of the 5S rRNA/L5/L18/L25 subcomplex. Contacts the 5S and 23S rRNAs.

This is one of the proteins that bind and probably mediate the attachment of the 5S RNA into the large ribosomal subunit, where it forms part of the central protuberance. The chain is Large ribosomal subunit protein uL18 from Methylibium petroleiphilum (strain ATCC BAA-1232 / LMG 22953 / PM1).